The primary structure comprises 215 residues: Thiamine-phosphate synthase (215 aa).

4-amino-2-methyl-5-(diphosphooxymethyl)pyrimidine contacts are provided by residues 40–44 (QLRIK) and Asn-72. Positions 73 and 92 each coordinate Mg(2+). Ser-111 lines the 4-amino-2-methyl-5-(diphosphooxymethyl)pyrimidine pocket. 137–139 (TTT) provides a ligand contact to 2-[(2R,5Z)-2-carboxy-4-methylthiazol-5(2H)-ylidene]ethyl phosphate. Lys-140 is a 4-amino-2-methyl-5-(diphosphooxymethyl)pyrimidine binding site. Residues Gly-169 and 189-190 (VS) contribute to the 2-[(2R,5Z)-2-carboxy-4-methylthiazol-5(2H)-ylidene]ethyl phosphate site.

The protein belongs to the thiamine-phosphate synthase family. Requires Mg(2+) as cofactor.

It catalyses the reaction 2-[(2R,5Z)-2-carboxy-4-methylthiazol-5(2H)-ylidene]ethyl phosphate + 4-amino-2-methyl-5-(diphosphooxymethyl)pyrimidine + 2 H(+) = thiamine phosphate + CO2 + diphosphate. The enzyme catalyses 2-(2-carboxy-4-methylthiazol-5-yl)ethyl phosphate + 4-amino-2-methyl-5-(diphosphooxymethyl)pyrimidine + 2 H(+) = thiamine phosphate + CO2 + diphosphate. The catalysed reaction is 4-methyl-5-(2-phosphooxyethyl)-thiazole + 4-amino-2-methyl-5-(diphosphooxymethyl)pyrimidine + H(+) = thiamine phosphate + diphosphate. Its pathway is cofactor biosynthesis; thiamine diphosphate biosynthesis; thiamine phosphate from 4-amino-2-methyl-5-diphosphomethylpyrimidine and 4-methyl-5-(2-phosphoethyl)-thiazole: step 1/1. Functionally, condenses 4-methyl-5-(beta-hydroxyethyl)thiazole monophosphate (THZ-P) and 2-methyl-4-amino-5-hydroxymethyl pyrimidine pyrophosphate (HMP-PP) to form thiamine monophosphate (TMP). The chain is Thiamine-phosphate synthase from Proteus mirabilis (strain HI4320).